A 128-amino-acid chain; its full sequence is Flagellar assembly factor FliW (128 aa).

Belongs to the FliW family. As to quaternary structure, interacts with translational regulator CsrA and flagellin(s).

The protein localises to the cytoplasm. In terms of biological role, acts as an anti-CsrA protein, binds CsrA and prevents it from repressing translation of its target genes, one of which is flagellin. Binds to flagellin and participates in the assembly of the flagellum. The polypeptide is Flagellar assembly factor FliW (Campylobacter fetus subsp. fetus (strain 82-40)).